Reading from the N-terminus, the 278-residue chain is DNA repair protein RecO (278 aa).

The segment covering 1-12 (MGTNDALTSTED) has biased composition (polar residues). The segment at 1-41 (MGTNDALTSTEDAVTAGANDAPLPAPPEPPRKARRATSRTS) is disordered.

Belongs to the RecO family.

Involved in DNA repair and RecF pathway recombination. This Burkholderia orbicola (strain AU 1054) protein is DNA repair protein RecO.